The sequence spans 232 residues: MDKAQQDALKKAAGIEAAKLVENGMIAGLGTGSTVKFLVDELGRRHQEEGLEFTGVTTSRRTQVQAESYGIKIVDIDDVDHIDVTIDGADEVDKNFNGIKGGGAALLWEKIVATNSNQIVWIVDESKVVDTIGKFPLPVEVIPFGAGQVIKKFEARGYKPVLRLDADGKEVRTDENNFVVDLHLERIDHPQELAEDLINTVGVVEHGLFLNMVDKVIVGDPNGPRVMTNANK.

Residues 31–34 (TGST), 87–90 (DGAD), and 100–103 (KGGG) contribute to the substrate site. Catalysis depends on Glu109, which acts as the Proton acceptor. Substrate is bound at residue Lys127.

It belongs to the ribose 5-phosphate isomerase family. As to quaternary structure, homodimer.

The enzyme catalyses aldehydo-D-ribose 5-phosphate = D-ribulose 5-phosphate. Its pathway is carbohydrate degradation; pentose phosphate pathway; D-ribose 5-phosphate from D-ribulose 5-phosphate (non-oxidative stage): step 1/1. Functionally, catalyzes the reversible conversion of ribose-5-phosphate to ribulose 5-phosphate. This is Ribose-5-phosphate isomerase A from Bifidobacterium longum (strain DJO10A).